The following is a 309-amino-acid chain: Small ribosomal subunit protein uS7m (309 aa).

Residues 39–86 (DSTTSSRLPPRVQIQQQQQQRTQPYSTETTPPPNSNNGDLAGIEGQPP) form a disordered region. Residues 51–61 (QIQQQQQQRTQ) show a composition bias toward low complexity.

It belongs to the universal ribosomal protein uS7 family. Component of the mitochondrial small ribosomal subunit (mt-SSU). Mature N.crassa 74S mitochondrial ribosomes consist of a small (37S) and a large (54S) subunit. The 37S small subunit contains a 16S ribosomal RNA (16S mt-rRNA) and 32 different proteins. The 54S large subunit contains a 23S rRNA (23S mt-rRNA) and 42 different proteins.

The protein resides in the mitochondrion. Its function is as follows. Component of the mitochondrial ribosome (mitoribosome), a dedicated translation machinery responsible for the synthesis of mitochondrial genome-encoded proteins, including at least some of the essential transmembrane subunits of the mitochondrial respiratory chain. The mitoribosomes are attached to the mitochondrial inner membrane and translation products are cotranslationally integrated into the membrane. The protein is Small ribosomal subunit protein uS7m (rsm7) of Neurospora crassa (strain ATCC 24698 / 74-OR23-1A / CBS 708.71 / DSM 1257 / FGSC 987).